Here is a 147-residue protein sequence, read N- to C-terminus: Membrane-spanning 4-domains subfamily A member 6E (147 aa).

The Cytoplasmic portion of the chain corresponds to Met1–Ser52. Residues Ser53 to Val73 form a helical membrane-spanning segment. The Extracellular segment spans residues Asn74–Thr120. The chain crosses the membrane as a helical span at residues Leu121 to Leu141. At Gln142–Val147 the chain is on the cytoplasmic side.

Belongs to the MS4A family. Expressed by malignant and fetal tissue at very low levels.

Its subcellular location is the membrane. Functionally, may be involved in signal transduction as a component of a multimeric receptor complex. In Homo sapiens (Human), this protein is Membrane-spanning 4-domains subfamily A member 6E (MS4A6E).